Here is a 367-residue protein sequence, read N- to C-terminus: Mating-type protein ALPHA2 (367 aa).

Positions 273–338 form a DNA-binding region, homeobox; TALE-type; that stretch reads GADAIDSEKL…NKRRTGAKKR (66 aa).

This sequence belongs to the TALE/M-ATYP homeobox family. In terms of assembly, forms a heterodimer with A1.

The protein localises to the nucleus. Mating type proteins are sequence specific DNA-binding proteins that act as master switches in yeast differentiation by controlling gene expression in a cell type-specific fashion. Transcriptional corepressor that acts in conjunction with A1 to repress transcription of haploid-specific genes. The protein is Mating-type protein ALPHA2 (MATB2) of Yarrowia lipolytica (strain CLIB 122 / E 150) (Yeast).